A 287-amino-acid polypeptide reads, in one-letter code: MKIRIAVPSKGRISEPAIRLLENAGVGLKDTVNRKLFSKTQHPQIEVMFSRAADIPEFVADGAADLGITGYDLIVERGSDVEILEDLKYGRASLVLAAPEDSTIRGPEDIPRGAVIATEFPGITENYLREHGIDAEVVELTGSTEIAPFIGVADLITDLSSTGTTLRMNHLRVIDTILESSVKLIANRESYATKSGIIEELRTGIRGVIDAEGKRLVMLNIDRKNLDRVRALMPGMTGPTVSEVLSDNGVVAVHAVVDEKEVFNLINRLKAVGARDILVVPIERIIP.

It belongs to the ATP phosphoribosyltransferase family. Long subfamily. Mg(2+) serves as cofactor.

It is found in the cytoplasm. The enzyme catalyses 1-(5-phospho-beta-D-ribosyl)-ATP + diphosphate = 5-phospho-alpha-D-ribose 1-diphosphate + ATP. Its pathway is amino-acid biosynthesis; L-histidine biosynthesis; L-histidine from 5-phospho-alpha-D-ribose 1-diphosphate: step 1/9. With respect to regulation, feedback inhibited by histidine. Its function is as follows. Catalyzes the condensation of ATP and 5-phosphoribose 1-diphosphate to form N'-(5'-phosphoribosyl)-ATP (PR-ATP). Has a crucial role in the pathway because the rate of histidine biosynthesis seems to be controlled primarily by regulation of HisG enzymatic activity. The chain is ATP phosphoribosyltransferase (hisG) from Methanothermobacter thermautotrophicus (strain ATCC 29096 / DSM 1053 / JCM 10044 / NBRC 100330 / Delta H) (Methanobacterium thermoautotrophicum).